The primary structure comprises 231 residues: Small ribosomal subunit protein uS3 (231 aa).

In terms of domain architecture, KH type-2 spans I39–R107.

This sequence belongs to the universal ribosomal protein uS3 family. As to quaternary structure, part of the 30S ribosomal subunit. Forms a tight complex with proteins S10 and S14.

Its function is as follows. Binds the lower part of the 30S subunit head. Binds mRNA in the 70S ribosome, positioning it for translation. This is Small ribosomal subunit protein uS3 from Campylobacter hominis (strain ATCC BAA-381 / DSM 21671 / CCUG 45161 / LMG 19568 / NCTC 13146 / CH001A).